Consider the following 103-residue polypeptide: UPF0145 protein PBPRB0184 (103 aa).

Belongs to the UPF0145 family.

This is UPF0145 protein PBPRB0184 from Photobacterium profundum (strain SS9).